Reading from the N-terminus, the 462-residue chain is L-seryl-tRNA(Sec) selenium transferase (462 aa).

K293 is subject to N6-(pyridoxal phosphate)lysine.

The protein belongs to the SelA family. Requires pyridoxal 5'-phosphate as cofactor.

The protein resides in the cytoplasm. It catalyses the reaction L-seryl-tRNA(Sec) + selenophosphate + H(+) = L-selenocysteinyl-tRNA(Sec) + phosphate. It functions in the pathway aminoacyl-tRNA biosynthesis; selenocysteinyl-tRNA(Sec) biosynthesis; selenocysteinyl-tRNA(Sec) from L-seryl-tRNA(Sec) (bacterial route): step 1/1. In terms of biological role, converts seryl-tRNA(Sec) to selenocysteinyl-tRNA(Sec) required for selenoprotein biosynthesis. The polypeptide is L-seryl-tRNA(Sec) selenium transferase (Clostridium botulinum (strain Okra / Type B1)).